The primary structure comprises 1370 residues: Insulin-like growth factor 1 receptor (1370 aa).

The signal sequence occupies residues 1–30; sequence MKSGSGGGSPTSLWGLVFLSAALSLWPTSG. A disulfide bond links cysteine 33 and cysteine 52. Residues asparagine 51, asparagine 102, and asparagine 135 are each glycosylated (N-linked (GlcNAc...) asparagine). Intrachain disulfides connect cysteine 150-cysteine 178, cysteine 182-cysteine 205, cysteine 192-cysteine 211, cysteine 215-cysteine 224, cysteine 219-cysteine 230, cysteine 231-cysteine 239, cysteine 235-cysteine 248, cysteine 251-cysteine 260, cysteine 264-cysteine 276, cysteine 282-cysteine 303, cysteine 307-cysteine 321, cysteine 324-cysteine 328, and cysteine 332-cysteine 354. N-linked (GlcNAc...) asparagine glycosylation is present at asparagine 245. Asparagine 314 carries N-linked (GlcNAc...) asparagine glycosylation. Asparagine 418 and asparagine 439 each carry an N-linked (GlcNAc...) asparagine glycan. Cysteine 456 and cysteine 489 are joined by a disulfide. Fibronectin type-III domains are found at residues 490-610 and 611-709; these read ESDV…TNAS and VPSI…TEAE. Asparagine 535, asparagine 608, asparagine 623, asparagine 641, asparagine 748, asparagine 757, asparagine 765, asparagine 901, and asparagine 914 each carry an N-linked (GlcNAc...) asparagine glycan. Over 742 to 936 the chain is Extracellular; the sequence is DVLQVANTTM…AKTTYENFMH (195 aa). The Fibronectin type-III 3 domain maps to 835-928; the sequence is IPGPVTWEPR…DPVFFYVPAK (94 aa). A helical membrane pass occupies residues 937–960; sequence LIIALPVAILLIVGGLVIMLYVFH. Residues 961 to 1370 lie on the Cytoplasmic side of the membrane; that stretch reads RKRNNSRLGN…ALPLPQSSTC (410 aa). The IRS1- and SHC1-binding signature appears at 978–981; sequence NPEY. Residue tyrosine 981 is modified to Phosphotyrosine. The 276-residue stretch at 1000-1275 folds into the Protein kinase domain; sequence ITMNRELGQG…SIKDEMEPSF (276 aa). ATP is bound by residues 1006-1014 and lysine 1034; that span reads LGQGSFGMV. The active-site Proton acceptor is the aspartate 1136. Tyrosine 1162, tyrosine 1166, and tyrosine 1167 each carry phosphotyrosine; by autocatalysis. Glycyl lysine isopeptide (Lys-Gly) (interchain with G-Cter in ubiquitin) cross-links involve residues lysine 1169 and lysine 1172. Serine 1279 carries the post-translational modification Phosphoserine; by GSK3-beta. Serine 1283 carries the phosphoserine modification. Residues 1304 to 1370 are disordered; that stretch reads NMESVPLDPS…ALPLPQSSTC (67 aa). Residues 1305–1321 are compositionally biased toward low complexity; sequence MESVPLDPSASSASLPL. The span at 1322-1331 shows a compositional bias: basic and acidic residues; it reads PERHSGHKAE.

This sequence belongs to the protein kinase superfamily. Tyr protein kinase family. Insulin receptor subfamily. As to quaternary structure, tetramer of 2 alpha and 2 beta chains linked by disulfide bonds. The alpha chains contribute to the formation of the ligand-binding domain, while the beta chain carries the kinase domain. Interacts with PIK3R1 and with the PTB/PID domains of IRS1 and SHC1 in vitro when autophosphorylated on tyrosine residues. Forms a hybrid receptor with INSR, the hybrid is a tetramer consisting of 1 alpha chain and 1 beta chain of INSR and 1 alpha chain and 1 beta chain of IGF1R. Interacts with ARRB1 and ARRB2. Interacts with GRB10. Interacts with RACK1. Interacts with SOCS1, SOCS2 and SOCS3. Interacts with 14-3-3 proteins. Interacts with NMD2. Interacts with MAP3K5. Interacts with STAT3. Found in a ternary complex with IGF1 and ITGAV:ITGB3 or ITGA6:ITGB4. Interacts (nascent precursor form) with ZFAND2B. In terms of processing, autophosphorylated on tyrosine residues in response to ligand binding. Autophosphorylation occurs in trans, i.e. one subunit of the dimeric receptor phosphorylates tyrosine residues on the other subunit. Autophosphorylation occurs in a sequential manner; Tyr-1166 is predominantly phosphorylated first, followed by phosphorylation of Tyr-1162 and Tyr-1167. While every single phosphorylation increases kinase activity, all three tyrosine residues in the kinase activation loop (Tyr-1162, Tyr-1166 and Tyr-1167) have to be phosphorylated for optimal activity. Can be autophosphorylated at additional tyrosine residues (in vitro). Autophosphorylated is followed by phosphorylation of juxtamembrane tyrosines and C-terminal serines. May also be phosphorylated at Tyr-1162 and Tyr-1167 by mTORC2. Phosphorylation of Tyr-981 is required for IRS1- and SHC1-binding. Phosphorylation of Ser-1279 by GSK-3beta restrains kinase activity and promotes cell surface expression, it requires a priming phosphorylation at Ser-1283. Dephosphorylated by PTPN1. Post-translationally, polyubiquitinated at Lys-1169 and Lys-1172 through both 'Lys-48' and 'Lys-29' linkages, promoting receptor endocytosis and subsequent degradation by the proteasome. Ubiquitination is facilitated by pre-existing phosphorylation. Sumoylated with SUMO1. In terms of processing, controlled by regulated intramembrane proteolysis (RIP). Undergoes metalloprotease-dependent constitutive ectodomain shedding to produce a membrane-anchored 52 kDa C-Terminal fragment which is further processed by presenilin gamma-secretase to yield an intracellular 50 kDa fragment.

Its subcellular location is the cell membrane. The enzyme catalyses L-tyrosyl-[protein] + ATP = O-phospho-L-tyrosyl-[protein] + ADP + H(+). With respect to regulation, activated by autophosphorylation at Tyr-1162, Tyr-1166 and Tyr-1167 on the kinase activation loop; phosphorylation at all three tyrosine residues is required for optimal kinase activity. Inhibited by MSC1609119A-1, BMS-754807, PQIP, benzimidazole pyridinone, isoquinolinedione, bis-azaindole, 3-cyanoquinoline, 2,4-bis-arylamino-1,3-pyrimidine, pyrrolopyrimidine, pyrrole-5-carboxaldehyde, picropodophyllin (PPP), tyrphostin derivatives. While most inhibitors bind to the ATP binding pocket, MSC1609119A-1 functions as allosteric inhibitor and binds close to the DFG motif and the activation loop. Dephosphorylated by PTPN1. In terms of biological role, receptor tyrosine kinase which mediates actions of insulin-like growth factor 1 (IGF1). Binds IGF1 with high affinity and IGF2 and insulin (INS) with a lower affinity. The activated IGF1R is involved in cell growth and survival control. IGF1R is crucial for tumor transformation and survival of malignant cell. Ligand binding activates the receptor kinase, leading to receptor autophosphorylation, and tyrosines phosphorylation of multiple substrates, that function as signaling adapter proteins including, the insulin-receptor substrates (IRS1/2), Shc and 14-3-3 proteins. Phosphorylation of IRSs proteins lead to the activation of two main signaling pathways: the PI3K-AKT/PKB pathway and the Ras-MAPK pathway. The result of activating the MAPK pathway is increased cellular proliferation, whereas activating the PI3K pathway inhibits apoptosis and stimulates protein synthesis. Phosphorylated IRS1 can activate the 85 kDa regulatory subunit of PI3K (PIK3R1), leading to activation of several downstream substrates, including protein AKT/PKB. AKT phosphorylation, in turn, enhances protein synthesis through mTOR activation and triggers the antiapoptotic effects of IGFIR through phosphorylation and inactivation of BAD. In parallel to PI3K-driven signaling, recruitment of Grb2/SOS by phosphorylated IRS1 or Shc leads to recruitment of Ras and activation of the ras-MAPK pathway. In addition to these two main signaling pathways IGF1R signals also through the Janus kinase/signal transducer and activator of transcription pathway (JAK/STAT). Phosphorylation of JAK proteins can lead to phosphorylation/activation of signal transducers and activators of transcription (STAT) proteins. In particular activation of STAT3, may be essential for the transforming activity of IGF1R. The JAK/STAT pathway activates gene transcription and may be responsible for the transforming activity. JNK kinases can also be activated by the IGF1R. IGF1 exerts inhibiting activities on JNK activation via phosphorylation and inhibition of MAP3K5/ASK1, which is able to directly associate with the IGF1R. When present in a hybrid receptor with INSR, binds IGF1. This chain is Insulin-like growth factor 1 receptor (Igf1r), found in Rattus norvegicus (Rat).